A 569-amino-acid chain; its full sequence is Isocitrate dehydrogenase kinase/phosphatase (569 aa).

ATP is bound by residues 316-322 (APGVRGM) and Lys337. The active site involves Asp372.

The protein belongs to the AceK family.

The protein localises to the cytoplasm. It carries out the reaction L-seryl-[isocitrate dehydrogenase] + ATP = O-phospho-L-seryl-[isocitrate dehydrogenase] + ADP + H(+). Its function is as follows. Bifunctional enzyme which can phosphorylate or dephosphorylate isocitrate dehydrogenase (IDH) on a specific serine residue. This is a regulatory mechanism which enables bacteria to bypass the Krebs cycle via the glyoxylate shunt in response to the source of carbon. When bacteria are grown on glucose, IDH is fully active and unphosphorylated, but when grown on acetate or ethanol, the activity of IDH declines drastically concomitant with its phosphorylation. This Pseudomonas putida (strain W619) protein is Isocitrate dehydrogenase kinase/phosphatase.